The sequence spans 667 residues: DNA ligase (667 aa).

Residues Asp-32–Asp-36, Ser-81–Leu-82, and Glu-110 contribute to the NAD(+) site. Lys-112 acts as the N6-AMP-lysine intermediate in catalysis. 4 residues coordinate NAD(+): Arg-133, Glu-167, Lys-283, and Lys-307. The Zn(2+) site is built by Cys-401, Cys-404, Cys-419, and Cys-424. A BRCT domain is found at Glu-586–Ser-667.

The protein belongs to the NAD-dependent DNA ligase family. LigA subfamily. It depends on Mg(2+) as a cofactor. Mn(2+) serves as cofactor.

It carries out the reaction NAD(+) + (deoxyribonucleotide)n-3'-hydroxyl + 5'-phospho-(deoxyribonucleotide)m = (deoxyribonucleotide)n+m + AMP + beta-nicotinamide D-nucleotide.. Its function is as follows. DNA ligase that catalyzes the formation of phosphodiester linkages between 5'-phosphoryl and 3'-hydroxyl groups in double-stranded DNA using NAD as a coenzyme and as the energy source for the reaction. It is essential for DNA replication and repair of damaged DNA. This Staphylococcus aureus (strain bovine RF122 / ET3-1) protein is DNA ligase.